The chain runs to 118 residues: Mating-type P-specific polypeptide Pc (118 aa).

A DNA-binding region (HMG box) is located at residues 29–97 (KTTIYKNGFM…VRRQIAKLER (69 aa)).

The protein localises to the nucleus. In terms of biological role, mating type proteins are sequence specific DNA-binding proteins that act as master switches in yeast differentiation by controlling gene expression in a cell type-specific fashion. Required for conjugation and efficient meiosis. The sequence is that of Mating-type P-specific polypeptide Pc (mat2-Pc) from Schizosaccharomyces pombe (Fission yeast).